The sequence spans 334 residues: MTKPIVFSGAQPSGELTIGNYMGALRQWVNMQDDYHCIYCIVDQHAITVRQDAQKLRKATLDTLALYLACGIDPEKSTIFVQSHVPEHAQLGWALNCYTYFGELSRMTQFKDKSARYAENINAGLFGYPVLMAADILLYQTNLVPVGEDQKQHLELSRDIAQRFNALYGEIFKVPEPFIPKSGARVMSLLEPTKKMSKSDDNRNNVIGLLEDPKSVVKKIKRAVTDSDEPPVVRYDVQNKAGVSNLLDILSAVTGQSIPELEKQFEGKMYGHLKGEVADAVSGMLTELQERYHRFRNDEAFLQQVMKDGAEKASVHASRTLKAVYEAIGFVAKP.

Residues Gln-11 to Ser-13 and Gly-19 to Asn-20 each bind ATP. The short motif at Pro-12–Asn-20 is the 'HIGH' region element. Residue Asp-135 coordinates L-tryptophan. Residues Gly-147–Asp-149, Val-186, and Lys-195–Ser-199 each bind ATP. The 'KMSKS' region motif lies at Lys-195–Ser-199.

Belongs to the class-I aminoacyl-tRNA synthetase family. As to quaternary structure, homodimer.

Its subcellular location is the cytoplasm. The catalysed reaction is tRNA(Trp) + L-tryptophan + ATP = L-tryptophyl-tRNA(Trp) + AMP + diphosphate + H(+). In terms of biological role, catalyzes the attachment of tryptophan to tRNA(Trp). The sequence is that of Tryptophan--tRNA ligase from Shigella flexneri.